Consider the following 96-residue polypeptide: 5-hydroxytryptamine receptor 2B (96 aa).

The Extracellular segment spans residues 1 to 8 (CNQSTLQM). N-linked (GlcNAc...) asparagine glycosylation occurs at asparagine 2. A helical membrane pass occupies residues 9 to 30 (LLEIFVWIGYVSSGVNPLVYTL). Residues 24–28 (NPLVY) carry the NPxxY motif; important for ligand-induced conformation changes and signaling motif. Residues 31–96 (FNKTFRDAFG…STMYQSPVRL (66 aa)) are Cytoplasmic-facing. The S-palmitoyl cysteine moiety is linked to residue cysteine 45.

This sequence belongs to the G-protein coupled receptor 1 family. In terms of assembly, interacts (via C-terminus) with MPDZ.

It localises to the cell membrane. Its subcellular location is the synapse. The protein resides in the synaptosome. Its function is as follows. G-protein coupled receptor for 5-hydroxytryptamine (serotonin). Also functions as a receptor for various ergot alkaloid derivatives and psychoactive substances. Ligand binding causes a conformation change that triggers signaling via guanine nucleotide-binding proteins (G proteins) and modulates the activity of downstream effectors. HTR2B is coupled to G(q)/G(11) G alpha proteins and activates phospholipase C-beta, releasing diacylglycerol (DAG) and inositol 1,4,5-trisphosphate (IP3) second messengers that modulate the activity of phosphatidylinositol 3-kinase and promote the release of Ca(2+) ions from intracellular stores, respectively. Beta-arrestin family members inhibit signaling via G proteins and mediate activation of alternative signaling pathways. Plays a role in the regulation of dopamine and 5-hydroxytryptamine release, 5-hydroxytryptamine uptake and in the regulation of extracellular dopamine and 5-hydroxytryptamine levels, and thereby affects neural activity. May play a role in the perception of pain. Plays a role in the regulation of behavior, including impulsive behavior. Required for normal proliferation of embryonic cardiac myocytes and normal heart development. Protects cardiomyocytes against apoptosis. Plays a role in the adaptation of pulmonary arteries to chronic hypoxia. Plays a role in vasoconstriction. Required for normal osteoblast function and proliferation, and for maintaining normal bone density. Required for normal proliferation of the interstitial cells of Cajal in the intestine. In Cavia porcellus (Guinea pig), this protein is 5-hydroxytryptamine receptor 2B (HTR2B).